A 300-amino-acid polypeptide reads, in one-letter code: Cation-efflux pump FieF (300 aa).

The next 4 membrane-spanning stretches (helical) occupy residues 12-32, 39-59, 82-102, and 114-134; these read AAIA…FAWW, ILAA…NLLV, AALA…LTGI, and PGVG…LVSF. Zn(2+)-binding residues include D45 and D49. Zn(2+)-binding residues include H153 and D157. 2 consecutive transmembrane segments (helical) span residues 156–176 and 178–198; these read SDVM…YGWH and ADAL…LRMG.

The protein belongs to the cation diffusion facilitator (CDF) transporter (TC 2.A.4) family. FieF subfamily. In terms of assembly, homodimer.

Its subcellular location is the cell inner membrane. The catalysed reaction is Zn(2+)(in) + H(+)(out) = Zn(2+)(out) + H(+)(in). It catalyses the reaction Cd(2+)(in) + H(+)(out) = Cd(2+)(out) + H(+)(in). The enzyme catalyses Fe(2+)(in) + H(+)(out) = Fe(2+)(out) + H(+)(in). Divalent metal cation transporter which exports Zn(2+), Cd(2+) and possibly Fe(2+). May be involved in zinc and iron detoxification by efflux. In Shigella boydii serotype 18 (strain CDC 3083-94 / BS512), this protein is Cation-efflux pump FieF.